Consider the following 74-residue polypeptide: Ribosome modulation factor (74 aa).

The protein belongs to the ribosome modulation factor family.

It is found in the cytoplasm. During stationary phase, converts 70S ribosomes to an inactive dimeric form (100S ribosomes). In Cellvibrio japonicus (strain Ueda107) (Pseudomonas fluorescens subsp. cellulosa), this protein is Ribosome modulation factor.